We begin with the raw amino-acid sequence, 3298 residues long: Protocadherin-16 (3298 aa).

The signal sequence occupies residues 1–42; sequence MQKELGIVPSCPGMKSPRPHLLLPLLLLLLLLLGAGVPGAWG. Cadherin domains lie at 43 to 143, 144 to 255, 256 to 362, 367 to 472, 474 to 578, 579 to 685, 686 to 790, 791 to 894, 895 to 1000, 1001 to 1111, 1112 to 1211, 1218 to 1324, 1333 to 1436, 1437 to 1546, 1547 to 1649, 1650 to 1751, 1752 to 1855, 1856 to 1960, 1965 to 2068, 2069 to 2171, 2172 to 2277, 2278 to 2376, 2377 to 2482, 2483 to 2602, 2603 to 2706, 2707 to 2813, and 2814 to 2933; these read QAGS…APAF, PQAR…APAF, NQSR…QPSM, LSAD…APAF, RQLY…EPQF, QRTF…PPQF, YPRE…PPIF, EQLQ…SPAF, PAPE…APRF, NSPT…DPTF, LAVA…SPTF, AGGG…PPDL, VPVV…APAF, ARDP…APVF, ASPS…APTF, QQQE…APTF, GSAH…APAF, PVPA…APTF, LRLR…GPRF, PRAS…APRF, LRPH…RPTI, PQPW…APAF, SQSL…APSF, TLSH…PPVF, TRAS…GPAF, PLNL…DPVF, and LAPA…APDL. Residues 43–2940 lie on the Extracellular side of the membrane; sequence QAGSLDLQID…PDLNLLLVGA (2898 aa). N-linked (GlcNAc...) asparagine glycosylation is found at N217, N256, and N402. N-linked (GlcNAc...) asparagine glycosylation occurs at N584. The N-linked (GlcNAc...) asparagine glycan is linked to N1249. N-linked (GlcNAc...) asparagine glycosylation occurs at N1521. N1718 carries an N-linked (GlcNAc...) asparagine glycan. N-linked (GlcNAc...) asparagine glycosylation is present at N1996. The interval 2065–2094 is disordered; that stretch reads GPRFPRASSEATIRENAPPGTPIVSPRAVH. N-linked (GlcNAc...) asparagine glycosylation is found at N2361, N2428, and N2569. 3 N-linked (GlcNAc...) asparagine glycosylation sites follow: N2761, N2792, and N2862. Residues 2941–2961 traverse the membrane as a helical segment; sequence VAASLGVVVVLALAALVLGLV. Over 2962–3298 the chain is Cytoplasmic; that stretch reads RARSRKAEAA…EPPDDTELHI (337 aa). The interval 2986–3040 is disordered; the sequence is LQKLGREPPSPPPSEHLYHQTLPSYGGPGAGGPYPRGGSLDPSHSSGRGSAEAAE. Gly residues predominate over residues 3011–3020; sequence GGPGAGGPYP. Phosphoserine is present on S3055. Disordered stretches follow at residues 3062–3082 and 3233–3298; these read ARGPDSGIQQDADGLSDTSCE and ASHR…ELHI. Low complexity-rich tracts occupy residues 3244 to 3266 and 3276 to 3289; these read SLSSAAMSPSFSPSLSPLAARSP and GPSASALSAESGLE.

Heterophilic interaction with FAT4; this interaction affects their respective protein levels. In terms of tissue distribution, expressed in fibroblasts but not in melanocytes or keratinocytes.

It localises to the cell membrane. Functionally, calcium-dependent cell-adhesion protein. Mediates functions in neuroprogenitor cell proliferation and differentiation. In the heart, has a critical role for proper morphogenesis of the mitral valve, acting in the regulation of cell migration involved in valve formation. In Homo sapiens (Human), this protein is Protocadherin-16 (DCHS1).